Reading from the N-terminus, the 477-residue chain is Aspartyl/glutamyl-tRNA(Asn/Gln) amidotransferase subunit B (477 aa).

This sequence belongs to the GatB/GatE family. GatB subfamily. Heterotrimer of A, B and C subunits.

The enzyme catalyses L-glutamyl-tRNA(Gln) + L-glutamine + ATP + H2O = L-glutaminyl-tRNA(Gln) + L-glutamate + ADP + phosphate + H(+). The catalysed reaction is L-aspartyl-tRNA(Asn) + L-glutamine + ATP + H2O = L-asparaginyl-tRNA(Asn) + L-glutamate + ADP + phosphate + 2 H(+). Its function is as follows. Allows the formation of correctly charged Asn-tRNA(Asn) or Gln-tRNA(Gln) through the transamidation of misacylated Asp-tRNA(Asn) or Glu-tRNA(Gln) in organisms which lack either or both of asparaginyl-tRNA or glutaminyl-tRNA synthetases. The reaction takes place in the presence of glutamine and ATP through an activated phospho-Asp-tRNA(Asn) or phospho-Glu-tRNA(Gln). This Methylobacillus flagellatus (strain ATCC 51484 / DSM 6875 / VKM B-1610 / KT) protein is Aspartyl/glutamyl-tRNA(Asn/Gln) amidotransferase subunit B.